A 146-amino-acid chain; its full sequence is 3-dehydroquinate dehydratase (146 aa).

Y23 acts as the Proton acceptor in catalysis. Substrate-binding residues include N74, H80, and D87. H100 (proton donor) is an active-site residue. Substrate-binding positions include 101–102 (IS) and R111.

It belongs to the type-II 3-dehydroquinase family. As to quaternary structure, homododecamer.

The catalysed reaction is 3-dehydroquinate = 3-dehydroshikimate + H2O. It participates in metabolic intermediate biosynthesis; chorismate biosynthesis; chorismate from D-erythrose 4-phosphate and phosphoenolpyruvate: step 3/7. Catalyzes a trans-dehydration via an enolate intermediate. This chain is 3-dehydroquinate dehydratase, found in Bacillus cereus (strain B4264).